A 254-amino-acid polypeptide reads, in one-letter code: PAXIP1-associated glutamate-rich protein 1 (254 aa).

Disordered regions lie at residues 1–111 and 127–254; these read MSLA…PPSE and LQAE…QRKY. Residues 45 to 62 are compositionally biased toward basic and acidic residues; the sequence is KAEDEGEGGREETEREGS. Acidic residues predominate over residues 78–98; the sequence is EPAEEDSEDWCVPCSDEEVEL. The tract at residues 116–160 is sufficient for interaction with NCOA1; it reads YELLAAHGTLELQAEILPRRPPTPEAQSEEERSDEEPEAKEEEEE. The residue at position 138 (Thr138) is a Phosphothreonine. Over residues 142-159 the composition is skewed to acidic residues; sequence QSEEERSDEEPEAKEEEE. Phosphoserine is present on residues Ser143 and Ser148. The segment at 161–254 is sufficient for interaction with ESR1; the sequence is KPHMPTEFDF…SSLFPRQRKY (94 aa). Basic and acidic residues predominate over residues 195-223; that stretch reads QKREARLDKVLSDMKRHKKLEEQILRTGR. Ser237 bears the Phosphoserine mark.

In terms of assembly, component of the KMT2 family MLL2/MLL3 complex (also named ASCOM complex), at least composed of the HMTs KMT2D and/or KMT2C, the common subunits ASH2L, RBBP5, WDR5 and DPY30, and the complex type-specific subunits PAXIP1/PTIP, PAGR1, NCOA6 and KDM6A; PAXIP1 is required for the association with the MLL2/MLL3 complex. Forms a constitutive complex with PAXIP1/PTIP independently of the MLL2/MLL3 complex. Interacts with NCOA1, ESR1, NR3C1, AR. In terms of tissue distribution, ubiquitously expressed.

The protein resides in the nucleus. Its function is as follows. Its association with the histone methyltransferase MLL2/MLL3 complex is suggesting a role in epigenetic transcriptional activation. However, in association with PAXIP1/PTIP is proposed to function at least in part independently of the MLL2/MLL3 complex. Proposed to be recruited by PAXIP1 to sites of DNA damage where the PAGR1:PAXIP1 complex is required for cell survival in response to DNA damage independently of the MLL2/MLL3 complex. However, its function in DNA damage has been questioned. During immunoglobulin class switching in activated B-cells is involved in transcription regulation of downstream switch regions at the immunoglobulin heavy-chain (Igh) locus independently of the MLL2/MLL3 complex. Involved in both estrogen receptor-regulated gene transcription and estrogen-stimulated G1/S cell-cycle transition. Acts as a transcriptional cofactor for nuclear hormone receptors. Inhibits the induction properties of several steroid receptors such as NR3C1, AR and PPARG; the mechanism of inhibition appears to be gene-dependent. This Homo sapiens (Human) protein is PAXIP1-associated glutamate-rich protein 1 (PAGR1).